The following is a 348-amino-acid chain: 3',5'-cyclic-nucleotide phosphodiesterase (348 aa).

Requires Mn(2+) as cofactor.

It carries out the reaction a nucleoside 3',5'-cyclic phosphate + H2O = a nucleoside 5'-phosphate + H(+). In terms of biological role, hydrolyzes cAMP to 5'-AMP and cGMP to 5'-GMP. Does not show phosphohydrolase activity toward various phosphatidylcholine and phosphorylated sugars. The protein is 3',5'-cyclic-nucleotide phosphodiesterase of Helicobacter pylori (strain ATCC 700392 / 26695) (Campylobacter pylori).